A 249-amino-acid chain; its full sequence is Type I iodothyronine deiodinase (249 aa).

Residues 1 to 12 (MGLPQPGLWLKR) are Extracellular-facing. A helical; Signal-anchor for type III membrane protein transmembrane segment spans residues 13–33 (LWVLLEVAVHVVVGKVLLILF). Residues 34–249 (PDRVKRNILA…VRAVLEKLHS (216 aa)) are Cytoplasmic-facing. Selenocysteine 126 is a catalytic residue. Selenocysteine 126 is a non-standard amino acid (selenocysteine).

Belongs to the iodothyronine deiodinase family. Predominantly monomer. Can form homodimers but homodimerization is not essential for enzyme activity.

The protein resides in the cell membrane. It is found in the endoplasmic reticulum membrane. Its subcellular location is the basolateral cell membrane. It carries out the reaction 3,3',5-triiodo-L-thyronine + iodide + A + H(+) = L-thyroxine + AH2. It catalyses the reaction 3,3',5'-triiodo-L-thyronine + iodide + A + H(+) = L-thyroxine + AH2. The catalysed reaction is 3,3'-diiodo-L-thyronine + iodide + A + H(+) = 3,3',5'-triiodo-L-thyronine + AH2. The enzyme catalyses 3,3'-diiodo-L-thyronine + iodide + A + H(+) = 3,3',5-triiodo-L-thyronine + AH2. It carries out the reaction 3'-iodo-L-thyronine + iodide + A + H(+) = 3',5'-diiodo-L-thyronine + AH2. It catalyses the reaction 3-iodo-L-thyronine + iodide + A + H(+) = 3,5-diiodo-L-thyronine + AH2. The catalysed reaction is 3-iodo-L-thyronine + iodide + A + H(+) = 3,3'-diiodo-L-thyronine + AH2. The enzyme catalyses 3,3'-diiodothyronamine + iodide + A + H(+) = 3,3',5'-triiodothyronamine + AH2. It carries out the reaction 3'-iodothyronamine + iodide + A + H(+) = 3',5'-diiodothyronamine + AH2. It catalyses the reaction 3-iodothyronamine + iodide + A + H(+) = 3,3'-diiodothyronamine + AH2. The catalysed reaction is 3,3'-diiodothyronamine + iodide + A + H(+) = 3,3',5-triiodothyronamine + AH2. The enzyme catalyses 3-iodothyronamine + iodide + A + H(+) = 3,5-diiodothyronamine + AH2. It carries out the reaction 3,3'-diiodo-L-thyronine sulfate + iodide + A + H(+) = 3,3',5'-triiodo-L-thyronine sulfate + AH2. It catalyses the reaction 3,3',5'-triiodo-L-thyronine sulfate + iodide + A + H(+) = L-thyroxine sulfate + AH2. The catalysed reaction is 3,3'-diiodo-L-thyronine sulfate + iodide + A + H(+) = 3,3',5-triiodo-L-thyronine sulfate + AH2. Deiodination of substrates 3,3',5'-triiodothyronine, 3,3',5'-triiodothyronamine and 3',5'- diiodothyronamine are inhibited by 6n-propyl-2-thiouracil (PTU). Functionally, plays a crucial role in the metabolism of thyroid hormones (TH) and has specific roles in TH activation and inactivation by deiodination. Catalyzes the deiodination of L-thyroxine (T4) to 3,5,3'-triiodothyronine (T3), 3,3',5'-triiodothyronine (rT3) to 3,3'-diiodothyronine (3,3'-T2) and 3',5'-diiodothyronine (3',5'-T2) to 3'-monoiodothyronine (3'-T1) via outer-ring deiodination (ORD). Catalyzes the deiodination of T4 to 3,3',5'-triiodothyronine (rT3) via inner-ring deiodination (IRD). Catalyzes the deiodination of T3 to 3,3'-T2, 3,5-diiodothyronine (3,5-T2) to 3- monoiodothyronine (3-T1) and 3,3'-T2 to 3-T1 via IRD. Catalyzes the phenolic ring deiodinations of 3,3',5'-triiodothyronamine and 3',5'-diiodothyronamine. Catalyzes the phenolic ring deiodination of 3,3'-diiodothyronamine and tyrosyl ring deiodinations of 3,5,3'-triiodothyronamine and 3,5-diiodothyronamine. Catalyzes the deiodination of L-thyroxine sulfate and 3,3',5-triiodo-L-thyronine sulfate via IRD and of 3,3',5'-triiodo-L-thyronine sulfate via ORD. The chain is Type I iodothyronine deiodinase (DIO1) from Homo sapiens (Human).